The sequence spans 292 residues: Mycothiol acetyltransferase (292 aa).

2 consecutive N-acetyltransferase domains span residues 13 to 168 (ALDR…KWLQ) and 159 to 292 (KSVA…VYEK). Position 40 (Glu-40) interacts with 1D-myo-inositol 2-(L-cysteinylamino)-2-deoxy-alpha-D-glucopyranoside. 77–79 (LAV) is an acetyl-CoA binding site. 1D-myo-inositol 2-(L-cysteinylamino)-2-deoxy-alpha-D-glucopyranoside is bound by residues Glu-179, Lys-218, and Glu-226. Residues 230 to 232 (VGL) and 237 to 243 (RGRGLGD) contribute to the acetyl-CoA site. Residue Tyr-264 participates in 1D-myo-inositol 2-(L-cysteinylamino)-2-deoxy-alpha-D-glucopyranoside binding.

Belongs to the acetyltransferase family. MshD subfamily. Monomer.

It catalyses the reaction 1D-myo-inositol 2-(L-cysteinylamino)-2-deoxy-alpha-D-glucopyranoside + acetyl-CoA = mycothiol + CoA + H(+). Catalyzes the transfer of acetyl from acetyl-CoA to desacetylmycothiol (Cys-GlcN-Ins) to form mycothiol. The polypeptide is Mycothiol acetyltransferase (Corynebacterium glutamicum (strain ATCC 13032 / DSM 20300 / JCM 1318 / BCRC 11384 / CCUG 27702 / LMG 3730 / NBRC 12168 / NCIMB 10025 / NRRL B-2784 / 534)).